The primary structure comprises 368 residues: Phosphate acyltransferase (368 aa).

It belongs to the PlsX family. Homodimer. Probably interacts with PlsY.

The protein localises to the cytoplasm. It carries out the reaction a fatty acyl-[ACP] + phosphate = an acyl phosphate + holo-[ACP]. It participates in lipid metabolism; phospholipid metabolism. Catalyzes the reversible formation of acyl-phosphate (acyl-PO(4)) from acyl-[acyl-carrier-protein] (acyl-ACP). This enzyme utilizes acyl-ACP as fatty acyl donor, but not acyl-CoA. This Cereibacter sphaeroides (strain ATCC 17025 / ATH 2.4.3) (Rhodobacter sphaeroides) protein is Phosphate acyltransferase.